The sequence spans 486 residues: Protein nucleotidyltransferase YdiU (486 aa).

Residues Gly-90, Gly-92, Arg-93, Lys-113, Asp-125, Gly-126, Arg-176, and Arg-183 each coordinate ATP. Residue Asp-252 is the Proton acceptor of the active site. Residues Asn-253 and Asp-262 each contribute to the Mg(2+) site. Asp-262 serves as a coordination point for ATP.

The protein belongs to the SELO family. It depends on Mg(2+) as a cofactor. Mn(2+) is required as a cofactor.

It catalyses the reaction L-seryl-[protein] + ATP = 3-O-(5'-adenylyl)-L-seryl-[protein] + diphosphate. The enzyme catalyses L-threonyl-[protein] + ATP = 3-O-(5'-adenylyl)-L-threonyl-[protein] + diphosphate. It carries out the reaction L-tyrosyl-[protein] + ATP = O-(5'-adenylyl)-L-tyrosyl-[protein] + diphosphate. The catalysed reaction is L-histidyl-[protein] + UTP = N(tele)-(5'-uridylyl)-L-histidyl-[protein] + diphosphate. It catalyses the reaction L-seryl-[protein] + UTP = O-(5'-uridylyl)-L-seryl-[protein] + diphosphate. The enzyme catalyses L-tyrosyl-[protein] + UTP = O-(5'-uridylyl)-L-tyrosyl-[protein] + diphosphate. Nucleotidyltransferase involved in the post-translational modification of proteins. It can catalyze the addition of adenosine monophosphate (AMP) or uridine monophosphate (UMP) to a protein, resulting in modifications known as AMPylation and UMPylation. This chain is Protein nucleotidyltransferase YdiU, found in Pseudomonas putida (strain ATCC 47054 / DSM 6125 / CFBP 8728 / NCIMB 11950 / KT2440).